The following is a 406-amino-acid chain: Glucose-6-phosphate isomerase (406 aa).

Glu-259 serves as the catalytic Proton donor. Catalysis depends on residues His-284 and Lys-397.

The protein belongs to the GPI family.

Its subcellular location is the cytoplasm. The catalysed reaction is alpha-D-glucose 6-phosphate = beta-D-fructose 6-phosphate. It participates in carbohydrate biosynthesis; gluconeogenesis. Its pathway is carbohydrate degradation; glycolysis; D-glyceraldehyde 3-phosphate and glycerone phosphate from D-glucose: step 2/4. Functionally, catalyzes the reversible isomerization of glucose-6-phosphate to fructose-6-phosphate. The protein is Glucose-6-phosphate isomerase of Campylobacter jejuni subsp. jejuni serotype O:2 (strain ATCC 700819 / NCTC 11168).